A 365-amino-acid polypeptide reads, in one-letter code: Histidinol-phosphate aminotransferase (365 aa).

Lys220 is subject to N6-(pyridoxal phosphate)lysine.

It belongs to the class-II pyridoxal-phosphate-dependent aminotransferase family. Histidinol-phosphate aminotransferase subfamily. In terms of assembly, homodimer. It depends on pyridoxal 5'-phosphate as a cofactor.

The enzyme catalyses L-histidinol phosphate + 2-oxoglutarate = 3-(imidazol-4-yl)-2-oxopropyl phosphate + L-glutamate. It functions in the pathway amino-acid biosynthesis; L-histidine biosynthesis; L-histidine from 5-phospho-alpha-D-ribose 1-diphosphate: step 7/9. The sequence is that of Histidinol-phosphate aminotransferase from Neisseria meningitidis serogroup B (strain ATCC BAA-335 / MC58).